The primary structure comprises 122 residues: Large ribosomal subunit protein uL14 (122 aa).

This sequence belongs to the universal ribosomal protein uL14 family. In terms of assembly, part of the 50S ribosomal subunit. Forms a cluster with proteins L3 and L19. In the 70S ribosome, L14 and L19 interact and together make contacts with the 16S rRNA in bridges B5 and B8.

Binds to 23S rRNA. Forms part of two intersubunit bridges in the 70S ribosome. The polypeptide is Large ribosomal subunit protein uL14 (Streptococcus gordonii (strain Challis / ATCC 35105 / BCRC 15272 / CH1 / DL1 / V288)).